A 184-amino-acid chain; its full sequence is HVA22-like protein c (184 aa).

The next 3 helical transmembrane spans lie at 13–33 (VLIK…YPLY), 51–71 (LTYW…SKPL), and 73–93 (WFPI…LPQF).

This sequence belongs to the DP1 family. As to expression, predominantly expressed in flower buds and stem.

The protein localises to the membrane. In Arabidopsis thaliana (Mouse-ear cress), this protein is HVA22-like protein c (HVA22C).